A 521-amino-acid polypeptide reads, in one-letter code: Formate--tetrahydrofolate ligase (521 aa).

It belongs to the formate--tetrahydrofolate ligase family.

The catalysed reaction is (6S)-5,6,7,8-tetrahydrofolate + formate + ATP = (6R)-10-formyltetrahydrofolate + ADP + phosphate. It participates in one-carbon metabolism; tetrahydrofolate interconversion. The polypeptide is Formate--tetrahydrofolate ligase (Ureaplasma parvum serovar 3 (strain ATCC 700970)).